The following is a 197-amino-acid chain: Chitin synthase 3 (197 aa).

Belongs to the chitin synthase family. Class III subfamily.

It localises to the cell membrane. It catalyses the reaction [(1-&gt;4)-N-acetyl-beta-D-glucosaminyl](n) + UDP-N-acetyl-alpha-D-glucosamine = [(1-&gt;4)-N-acetyl-beta-D-glucosaminyl](n+1) + UDP + H(+). Polymerizes chitin, a structural polymer of the cell wall and septum, by transferring the sugar moiety of UDP-GlcNAc to the non-reducing end of the growing chitin polymer. The chain is Chitin synthase 3 (CHS3) from Exophiala jeanselmei (Dematiaceous fungus).